The chain runs to 110 residues: Parvalbumin alpha (110 aa).

2 consecutive EF-hand domains span residues 39–74 (KNAKDVEAVFYILDKDKSGFIEEDELKSVLKCFAPE) and 78–110 (LSEKETKDLLTAGDEDGDGKIGVSEFIQLVANS). The Ca(2+) site is built by Asp52, Asp54, Ser56, Phe58, Glu60, Glu63, Asp91, Asp93, Asp95, Lys97, and Glu102.

The protein belongs to the parvalbumin family.

Functionally, in muscle, parvalbumin is thought to be involved in relaxation after contraction. It binds two calcium ions. The sequence is that of Parvalbumin alpha from Callorhinchus milii (Ghost shark).